We begin with the raw amino-acid sequence, 232 residues long: Peptidyl-prolyl cis-trans isomerase FKBP18, chloroplastic (232 aa).

Residues 108–226 (GSTAQVHFDC…ELNIELLRVT (119 aa)) enclose the PPIase FKBP-type domain.

The protein belongs to the FKBP-type PPIase family.

It localises to the plastid. Its subcellular location is the chloroplast thylakoid lumen. The enzyme catalyses [protein]-peptidylproline (omega=180) = [protein]-peptidylproline (omega=0). In terms of biological role, PPIases accelerate the folding of proteins. It catalyzes the cis-trans isomerization of proline imidic peptide bonds in oligopeptides. The protein is Peptidyl-prolyl cis-trans isomerase FKBP18, chloroplastic (FKBP18) of Arabidopsis thaliana (Mouse-ear cress).